The following is a 171-amino-acid chain: Adenine phosphoribosyltransferase (171 aa).

The protein belongs to the purine/pyrimidine phosphoribosyltransferase family. In terms of assembly, homodimer.

The protein resides in the cytoplasm. The catalysed reaction is AMP + diphosphate = 5-phospho-alpha-D-ribose 1-diphosphate + adenine. It functions in the pathway purine metabolism; AMP biosynthesis via salvage pathway; AMP from adenine: step 1/1. Catalyzes a salvage reaction resulting in the formation of AMP, that is energically less costly than de novo synthesis. The chain is Adenine phosphoribosyltransferase from Ruminiclostridium cellulolyticum (strain ATCC 35319 / DSM 5812 / JCM 6584 / H10) (Clostridium cellulolyticum).